We begin with the raw amino-acid sequence, 421 residues long: Signal recognition particle receptor FtsY (421 aa).

Residues 1–10 (MFSFFRRKKK) are compositionally biased toward basic residues. Positions 1–22 (MFSFFRRKKKQETPAPEEAQIQ) are disordered. GTP is bound by residues 228-235 (GINGAGKT), 309-313 (DTAGR), and 373-376 (TKLD).

Belongs to the GTP-binding SRP family. FtsY subfamily. In terms of assembly, part of the signal recognition particle protein translocation system, which is composed of SRP and FtsY. SRP is a ribonucleoprotein composed of Ffh and a 4.5S RNA molecule.

The protein resides in the cell membrane. It is found in the cytoplasm. It carries out the reaction GTP + H2O = GDP + phosphate + H(+). Involved in targeting and insertion of nascent membrane proteins into the cytoplasmic membrane. Acts as a receptor for the complex formed by the signal recognition particle (SRP) and the ribosome-nascent chain (RNC). Interaction with SRP-RNC leads to the transfer of the RNC complex to the Sec translocase for insertion into the membrane, the hydrolysis of GTP by both Ffh and FtsY, and the dissociation of the SRP-FtsY complex into the individual components. The protein is Signal recognition particle receptor FtsY of Neisseria meningitidis serogroup C.